The chain runs to 217 residues: Probable disulfide bond formation protein D (217 aa).

The first 28 residues, 1–28 (MKSSNKLMALGIVFSIAVLIVIGTIVYS), serve as a signal peptide directing secretion. Cys66 and Cys69 form a disulfide bridge.

The protein belongs to the thioredoxin family. DsbA subfamily.

Its function is as follows. May be required for disulfide bond formation in some proteins. The sequence is that of Probable disulfide bond formation protein D (bdbD) from Bacillus anthracis.